The primary structure comprises 127 residues: MSLLKEFKEFAMRGNVMDLAVAVVMGVAFNKIVTALVDGIIMPCVGLLLGGVNIAGLSFTVGDAQIKWGNFLQNVIDFIIVAFAIFILIKLINLLQRKKANEPEPVTPEVQLLTEIRDLLARNSSKI.

3 consecutive transmembrane segments (helical) span residues 9–29, 32–52, and 75–95; these read EFAMRGNVMDLAVAVVMGVAF, IVTALVDGIIMPCVGLLLGGV, and VIDFIIVAFAIFILIKLINLL.

Belongs to the MscL family. As to quaternary structure, homopentamer.

Its subcellular location is the cell inner membrane. Its function is as follows. Channel that opens in response to stretch forces in the membrane lipid bilayer. May participate in the regulation of osmotic pressure changes within the cell. This chain is Large-conductance mechanosensitive channel, found in Legionella pneumophila (strain Lens).